The primary structure comprises 440 residues: Stromal membrane-associated protein 1 (440 aa).

Positions 18-143 (QLILSKLLRE…IAITNKEKEK (126 aa)) constitute an Arf-GAP domain. The C4-type zinc-finger motif lies at 33–56 (CADCEAKGPRWASWNIGVFICIRC). Basic and acidic residues-rich tracts occupy residues 140–158 (EKEKKKDEKKREKEPEKPA) and 165–178 (KLPKKEEQQLEPKK). 2 disordered regions span residues 140 to 211 (EKEK…PATA) and 410 to 440 (NASAGFGQPPSTTAGWSGSSSGQTLSTQLWK). Residues 192 to 196 (LLGLD) carry the Interaction with clathrin heavy chains motif. Positions 420-440 (STTAGWSGSSSGQTLSTQLWK) are enriched in low complexity.

In terms of assembly, interacts with ARF6. Interacts with clathrin heavy chains via the clathrin box-like motif. As to expression, detected in adult brain, lung, heart, liver, ovary and bone marrow. Detected in stromal cells of the red pulp of adult spleen.

It localises to the cell membrane. Its function is as follows. GTPase activating protein that acts on ARF6. Plays a role in clathrin-dependent endocytosis. May play a role in erythropoiesis. This Mus musculus (Mouse) protein is Stromal membrane-associated protein 1 (Smap1).